A 141-amino-acid polypeptide reads, in one-letter code: Large ribosomal subunit protein uL11 (141 aa).

Belongs to the universal ribosomal protein uL11 family. Part of the ribosomal stalk of the 50S ribosomal subunit. Interacts with L10 and the large rRNA to form the base of the stalk. L10 forms an elongated spine to which L12 dimers bind in a sequential fashion forming a multimeric L10(L12)X complex. In terms of processing, one or more lysine residues are methylated.

In terms of biological role, forms part of the ribosomal stalk which helps the ribosome interact with GTP-bound translation factors. This is Large ribosomal subunit protein uL11 from Herpetosiphon aurantiacus (strain ATCC 23779 / DSM 785 / 114-95).